The following is a 1342-amino-acid chain: DNA-directed RNA polymerase subunit beta (1342 aa).

This sequence belongs to the RNA polymerase beta chain family. In terms of assembly, the RNAP catalytic core consists of 2 alpha, 1 beta, 1 beta' and 1 omega subunit. When a sigma factor is associated with the core the holoenzyme is formed, which can initiate transcription.

The catalysed reaction is RNA(n) + a ribonucleoside 5'-triphosphate = RNA(n+1) + diphosphate. Its function is as follows. DNA-dependent RNA polymerase catalyzes the transcription of DNA into RNA using the four ribonucleoside triphosphates as substrates. The polypeptide is DNA-directed RNA polymerase subunit beta (Vibrio campbellii (strain ATCC BAA-1116)).